Reading from the N-terminus, the 294-residue chain is ADP-ribosyl-[dinitrogen reductase] glycohydrolase (294 aa).

Residues 100-102 (NTC), Glu-121, His-158, and Tyr-212 each bind ADP-D-ribose. 3 residues coordinate Mn(2+): Asp-243, Asp-245, and Thr-246.

The protein belongs to the ADP-ribosylglycohydrolase family. Monomer. The cofactor is Mn(2+).

Its subcellular location is the cytoplasm. It carries out the reaction N(omega)-alpha-(ADP-D-ribosyl)-L-arginyl-[dinitrogen reductase] + H2O = L-arginyl-[dinitrogen reductase] + ADP-D-ribose. Functionally, involved in the regulation of nitrogen fixation activity by the reversible ADP-ribosylation of one subunit of the homodimeric dinitrogenase reductase component of the nitrogenase enzyme complex. The ADP-ribosyltransferase (DraT) transfers the ADP-ribose group from NAD to dinitrogenase reductase. The ADP-ribose group is removed through the action of the ADP-ribosylglycohydrolase (DraG, this entry). The polypeptide is ADP-ribosyl-[dinitrogen reductase] glycohydrolase (Rhodospirillum rubrum).